Reading from the N-terminus, the 268-residue chain is MSVLQEIIDGVREDLEPRRRDLPEARLAELVAAAPAPRDAHAALHGGRTDPAGIRVISEVKRASPSKGALAEIPEPATLARAYERGGASAVSVLTEARRFGGSLADLDAVRAAVDLPVLRKDFTVTEYQIHEARAHGADLVLLIVAALDDAELAGFLQLTESLGMHALVEAHTPEEIERGVAAGARILGVNVRNLKTLDVDPARYAALADGLPEDVVRVAESGVESEAQIKAYAAAGADVVLVGEALVRHGAPEEALRAFRAASLTVR.

This sequence belongs to the TrpC family.

The enzyme catalyses 1-(2-carboxyphenylamino)-1-deoxy-D-ribulose 5-phosphate + H(+) = (1S,2R)-1-C-(indol-3-yl)glycerol 3-phosphate + CO2 + H2O. It participates in amino-acid biosynthesis; L-tryptophan biosynthesis; L-tryptophan from chorismate: step 4/5. The polypeptide is Indole-3-glycerol phosphate synthase (Micrococcus luteus (strain ATCC 4698 / DSM 20030 / JCM 1464 / CCM 169 / CCUG 5858 / IAM 1056 / NBRC 3333 / NCIMB 9278 / NCTC 2665 / VKM Ac-2230) (Micrococcus lysodeikticus)).